The sequence spans 152 residues: Cell division protein SepF (152 aa).

A disordered region spans residues 25–54; sequence EEREPVQEEKGTKDKAAFQERPQTGKQNVV. Basic and acidic residues predominate over residues 28–42; the sequence is EPVQEEKGTKDKAAF.

It belongs to the SepF family. In terms of assembly, homodimer. Interacts with FtsZ.

The protein resides in the cytoplasm. Cell division protein that is part of the divisome complex and is recruited early to the Z-ring. Probably stimulates Z-ring formation, perhaps through the cross-linking of FtsZ protofilaments. Its function overlaps with FtsA. The chain is Cell division protein SepF from Bacillus pumilus (strain SAFR-032).